The chain runs to 129 residues: UPF0325 protein PC1_0937 (129 aa).

Belongs to the UPF0325 family.

The protein is UPF0325 protein PC1_0937 of Pectobacterium carotovorum subsp. carotovorum (strain PC1).